The sequence spans 1726 residues: Protein Shroom2 (1726 aa).

Residues 79 to 159 enclose the PDZ domain; sequence AGGCYSYWRG…ILKMIVKRRN (81 aa). Disordered regions lie at residues 294–373, 425–451, 657–676, and 697–785; these read DNTK…RSDS, RTVA…LSPY, FSQL…DYSW, and EGRN…STYR. Residues 318–328 are compositionally biased toward polar residues; the sequence is VLQSTSINETS. Residues 329–338 are compositionally biased toward basic and acidic residues; the sequence is KIQRTEDNTE. Over residues 657–667 the composition is skewed to basic and acidic residues; it reads FSQLDHSEKGS. Composition is skewed to polar residues over residues 746-755 and 769-785; these read SKSTAALTES and LESM…STYR. In terms of domain architecture, ASD1 spans 788 to 877; that stretch reads LQEAQARVLR…SEPEKINEVG (90 aa). Disordered regions lie at residues 913 to 968, 1007 to 1080, 1092 to 1120, 1166 to 1240, 1269 to 1299, and 1471 to 1499; these read PKVP…DKVT, LDAD…QCGA, KWKP…GTLP, FKKR…KNPS, SSKS…DKPP, and AQQR…VPSA. Over residues 917–926 the composition is skewed to low complexity; that stretch reads PKVVSSSQSE. The segment covering 936–948 has biased composition (basic and acidic residues); that stretch reads DYAKSSEGQESKR. Composition is skewed to polar residues over residues 1054-1070 and 1104-1119; these read NSNS…SPTR and ETSN…SGTL. Residues 1191 to 1205 are compositionally biased toward low complexity; sequence SSSSLATSSESLLTA. Residues 1209–1235 are compositionally biased toward polar residues; sequence RAQSYSPSSQDTFPPQSLQKQSPSTYP. The 295-residue stretch at 1427 to 1721 folds into the ASD2 domain; the sequence is EELVREIVDK…QLKCLTDSLP (295 aa).

This sequence belongs to the shroom family. As to quaternary structure, interacts with F-actin.

It is found in the apical cell membrane. The protein resides in the cell junction. The protein localises to the tight junction. It localises to the cytoplasm. Its subcellular location is the cytoskeleton. Its function is as follows. May be involved in endothelial cell morphology changes during cell spreading. Required for eye pigmentation. In the retinal pigment epithelium, regulates the biogenesis of melanosomes and promotes their association with the apical cell surface by inducing gamma-tubulin redistribution. In Xenopus tropicalis (Western clawed frog), this protein is Protein Shroom2 (shroom2).